The primary structure comprises 434 residues: G2/mitotic-specific cyclin-2 (434 aa).

Belongs to the cyclin family. Cyclin AB subfamily. In terms of assembly, interacts with the CDC2 protein kinase to form a serine/threonine kinase holoenzyme complex also known as maturation promoting factor (MPF). The cyclin subunit imparts substrate specificity to the complex.

Its function is as follows. Essential for the control of the cell cycle at the G2/M (mitosis) transition. The polypeptide is G2/mitotic-specific cyclin-2 (Medicago sativa subsp. varia (Alfalfa)).